Reading from the N-terminus, the 140-residue chain is Hemoglobin subunit beta (140 aa).

The 140-residue stretch at 1–140 (GSDLVSGFWG…VGDALAKAYH (140 aa)) folds into the Globin domain. Heme b-binding residues include H57 and H86.

The protein belongs to the globin family. As to quaternary structure, heterotetramer of two alpha chains and two beta chains. As to expression, red blood cells.

Involved in oxygen transport from the lung to the various peripheral tissues. This is Hemoglobin subunit beta (HBB) from Pelophylax lessonae (Pool frog).